Reading from the N-terminus, the 292-residue chain is Small ribosomal subunit protein uS5 (292 aa).

Residues 1 to 56 (MADDAGAAGGPGGPGGPGMGGRGGFRGGFGSGIRGRGRGRGRGRGRGRGARGGKAE) are disordered. Position 2 is an N-acetylalanine (Ala2). The span at 7-34 (AAGGPGGPGGPGMGGRGGFRGGFGSGIR) shows a compositional bias: gly residues. The span at 35 to 51 (GRGRGRGRGRGRGRGAR) shows a compositional bias: basic residues. Glycyl lysine isopeptide (Lys-Gly) (interchain with G-Cter in ubiquitin) cross-links involve residues Lys54 and Lys58. The region spanning 102–165 (LKDEVLKIMP…ILAKLSIVPV (64 aa)) is the S5 DRBM domain. Thr251 carries the post-translational modification Phosphothreonine. Lys262 is subject to N6-acetyllysine. At Ser263 the chain carries Phosphoserine. Phosphothreonine is present on Thr269. Lys274 is modified (N6-acetyllysine; alternate). Residue Lys274 forms a Glycyl lysine isopeptide (Lys-Gly) (interchain with G-Cter in SUMO1); alternate linkage. Residue Lys274 forms a Glycyl lysine isopeptide (Lys-Gly) (interchain with G-Cter in SUMO2); alternate linkage. Residue Lys274 forms a Glycyl lysine isopeptide (Lys-Gly) (interchain with G-Cter in ubiquitin); alternate linkage. Ser280 is subject to Phosphoserine.

This sequence belongs to the universal ribosomal protein uS5 family. Component of the small ribosomal subunit. Interacts with zinc finger protein ZNF277 (via zinc-finger domains); the interaction is direct; the interaction is extra-ribosomal. Interaction with ZNF277 competes with the binding of RPS2 to protein arginine methyltransferase PRMT3. Post-translationally, citrullinated by PADI4 in the Arg/Gly-rich region. Asymmetric arginine dimethylation by PRMT3 occurs at multiple sites in the Arg/Gly-rich region. In terms of processing, monoubiquitinated at Lys-54 and Lys-58 by RNF10 when a ribosome has stalled during translation, leading to its degradation by the proteasome. Deubiquitinated at Lys-54 and Lys-58 by USP10, preventing degradation by the proteasome and promoting 40S ribosome subunit recycling following ribosome dissociation.

The protein resides in the cytoplasm. Its subcellular location is the nucleus. The protein localises to the nucleolus. Its function is as follows. Component of the ribosome, a large ribonucleoprotein complex responsible for the synthesis of proteins in the cell. The small ribosomal subunit (SSU) binds messenger RNAs (mRNAs) and translates the encoded message by selecting cognate aminoacyl-transfer RNA (tRNA) molecules. The large subunit (LSU) contains the ribosomal catalytic site termed the peptidyl transferase center (PTC), which catalyzes the formation of peptide bonds, thereby polymerizing the amino acids delivered by tRNAs into a polypeptide chain. The nascent polypeptides leave the ribosome through a tunnel in the LSU and interact with protein factors that function in enzymatic processing, targeting, and the membrane insertion of nascent chains at the exit of the ribosomal tunnel. Plays a role in the assembly and function of the 40S ribosomal subunit. In Oryctolagus cuniculus (Rabbit), this protein is Small ribosomal subunit protein uS5 (RPS2).